The primary structure comprises 165 residues: Regulatory protein RecX (165 aa).

The protein belongs to the RecX family.

It localises to the cytoplasm. Its function is as follows. Modulates RecA activity. This chain is Regulatory protein RecX, found in Cronobacter sakazakii (strain ATCC BAA-894) (Enterobacter sakazakii).